We begin with the raw amino-acid sequence, 296 residues long: Ribosomal protein L11 methyltransferase (296 aa).

S-adenosyl-L-methionine-binding residues include Thr-139, Gly-163, Asp-185, and Asn-232.

Belongs to the methyltransferase superfamily. PrmA family.

Its subcellular location is the cytoplasm. The enzyme catalyses L-lysyl-[protein] + 3 S-adenosyl-L-methionine = N(6),N(6),N(6)-trimethyl-L-lysyl-[protein] + 3 S-adenosyl-L-homocysteine + 3 H(+). Functionally, methylates ribosomal protein L11. In Picosynechococcus sp. (strain ATCC 27264 / PCC 7002 / PR-6) (Agmenellum quadruplicatum), this protein is Ribosomal protein L11 methyltransferase.